The chain runs to 210 residues: Cell division protein FtsQ (210 aa).

The region spanning 1–58 is the POTRA domain; the sequence is LQTSEIEVFQLLGLDGSTSLIALDIDAARRKLVQLPWVEDVDIRKVYPKTVEVRLKER. Residues 8–25 traverse the membrane as a helical segment; that stretch reads VFQLLGLDGSTSLIALDI.

It belongs to the FtsQ/DivIB family. FtsQ subfamily.

It localises to the cell inner membrane. In terms of biological role, essential cell division protein. This is Cell division protein FtsQ from Rhizobium radiobacter (Agrobacterium tumefaciens).